A 1141-amino-acid polypeptide reads, in one-letter code: Isoleucine--tRNA ligase (1141 aa).

The short motif at 50 to 60 (PSANGMPGIHH) is the 'HIGH' region element. A 'KMSKS' region motif is present at residues 689–693 (KMSKR). Lysine 692 is an ATP binding site.

This sequence belongs to the class-I aminoacyl-tRNA synthetase family. IleS type 2 subfamily. Monomer. It depends on Zn(2+) as a cofactor.

Its subcellular location is the cytoplasm. It carries out the reaction tRNA(Ile) + L-isoleucine + ATP = L-isoleucyl-tRNA(Ile) + AMP + diphosphate. Catalyzes the attachment of isoleucine to tRNA(Ile). As IleRS can inadvertently accommodate and process structurally similar amino acids such as valine, to avoid such errors it has two additional distinct tRNA(Ile)-dependent editing activities. One activity is designated as 'pretransfer' editing and involves the hydrolysis of activated Val-AMP. The other activity is designated 'posttransfer' editing and involves deacylation of mischarged Val-tRNA(Ile). This chain is Isoleucine--tRNA ligase, found in Bacteroides fragilis (strain YCH46).